The sequence spans 62 residues: Large ribosomal subunit protein uL30 (62 aa).

Belongs to the universal ribosomal protein uL30 family. In terms of assembly, part of the 50S ribosomal subunit.

This Marinobacter nauticus (strain ATCC 700491 / DSM 11845 / VT8) (Marinobacter aquaeolei) protein is Large ribosomal subunit protein uL30.